The primary structure comprises 62 residues: MDPQDCKCETGASCSCGTTCSCSNCKCTSCKKSCCSCCPAECSKCSQGCHCEKGSKKCSCCN.

N-acetylmethionine is present on Met-1. A beta region spans residues 1–30 (MDPQDCKCETGASCSCGTTCSCSNCKCTSC). Residues Cys-6, Cys-8, Cys-14, Cys-16, Cys-20, Cys-22, Cys-25, Cys-27, Cys-30, Cys-34, Cys-35, Cys-37, Cys-38, Cys-42, Cys-45, Cys-49, Cys-51, Cys-58, Cys-60, and Cys-61 each contribute to the a divalent metal cation site. Residues 31–62 (KKSCCSCCPAECSKCSQGCHCEKGSKKCSCCN) form an alpha region.

It belongs to the metallothionein superfamily. Type 1 family.

Functionally, metallothioneins have a high content of cysteine residues that bind various heavy metals. This Xenopus laevis (African clawed frog) protein is Metallothionein (mt-a).